The chain runs to 730 residues: Translation factor GUF1 homolog, mitochondrial (730 aa).

Positions 106–289 constitute a tr-type G domain; that stretch reads ELIRNFCIIA…AVVVSIPPPK (184 aa). GTP is bound by residues 115-122, 182-186, and 236-239; these read AHVDHGKS, DTPGH, and NKID.

The protein belongs to the TRAFAC class translation factor GTPase superfamily. Classic translation factor GTPase family. LepA subfamily.

It localises to the mitochondrion inner membrane. The enzyme catalyses GTP + H2O = GDP + phosphate + H(+). Functionally, promotes mitochondrial protein synthesis. May act as a fidelity factor of the translation reaction, by catalyzing a one-codon backward translocation of tRNAs on improperly translocated ribosomes. Binds to mitochondrial ribosomes in a GTP-dependent manner. The sequence is that of Translation factor GUF1 homolog, mitochondrial from Theileria annulata.